We begin with the raw amino-acid sequence, 44 residues long: MRDIKTYLSVAPVLATLWFGSLAGLLIEINRLFPDALVFPFFSF.

Residues 7–27 form a helical membrane-spanning segment; sequence YLSVAPVLATLWFGSLAGLLI.

It belongs to the PsaJ family.

The protein localises to the plastid. Its subcellular location is the chloroplast thylakoid membrane. May help in the organization of the PsaE and PsaF subunits. The sequence is that of Photosystem I reaction center subunit IX from Piper cenocladum (Ant piper).